Reading from the N-terminus, the 384-residue chain is Erythronate-4-phosphate dehydrogenase (384 aa).

Residues S45 and T66 each contribute to the substrate site. NAD(+) contacts are provided by D147 and T177. Residue R210 is part of the active site. Position 234 (D234) interacts with NAD(+). Residue E239 is part of the active site. The active-site Proton donor is the H256. NAD(+) is bound at residue G259. Residue Y260 participates in substrate binding.

It belongs to the D-isomer specific 2-hydroxyacid dehydrogenase family. PdxB subfamily. Homodimer.

It is found in the cytoplasm. It carries out the reaction 4-phospho-D-erythronate + NAD(+) = (R)-3-hydroxy-2-oxo-4-phosphooxybutanoate + NADH + H(+). It functions in the pathway cofactor biosynthesis; pyridoxine 5'-phosphate biosynthesis; pyridoxine 5'-phosphate from D-erythrose 4-phosphate: step 2/5. Functionally, catalyzes the oxidation of erythronate-4-phosphate to 3-hydroxy-2-oxo-4-phosphonooxybutanoate. The chain is Erythronate-4-phosphate dehydrogenase from Marinobacter nauticus (strain ATCC 700491 / DSM 11845 / VT8) (Marinobacter aquaeolei).